A 367-amino-acid chain; its full sequence is Carbamoyl-phosphate synthase (367 aa).

One can recognise an ATP-grasp domain in the interval 111-296 (KEFYNEIGVP…SLCELVNMAA (186 aa)). ATP is bound at residue 137–186 (KMEFPVVLKQGQGQGGKDIKVAESLDDVKEYFEEFDHALCEKFIEGSEIS). Mg(2+)-binding residues include aspartate 253, glutamate 267, and asparagine 269. Positions 253, 267, and 269 each coordinate Mn(2+).

Belongs to the small carbamoyl-phosphate synthase family. As to quaternary structure, forms homodimers and homotetramers (dimers of dimers). Requires Mg(2+) as cofactor. The cofactor is Mn(2+).

The enzyme catalyses hydrogencarbonate + NH4(+) + 2 ATP = carbamoyl phosphate + 2 ADP + phosphate + 2 H(+). Catalyzes the synthesis of carbamoyl phosphate from ATP, ammonium and bicarbonate. Proceeds via a three-step mechanism, i.e. the phosphorylation of hydrogencarbonate to carboxyphosphate, a nucleophilic attack of ammonia on carboxyphosphate yielding carbamate, and the phosphorylation of carbamate forming carbamoyl phosphate. In M.smithii, the predominant archaeon in the human gut, one function of this enzyme may be to sequester ammonia, a scarce nutrient in the intestine which is the major source of nitrogen in M.smithii for the biosynthesis of nucleotides, amino acids, and many other metabolites. The protein is Carbamoyl-phosphate synthase of Methanobrevibacter smithii (strain ATCC 35061 / DSM 861 / OCM 144 / PS).